Consider the following 591-residue polypeptide: Aspartate--tRNA(Asp/Asn) ligase (591 aa).

Position 170 (E170) interacts with L-aspartate. An aspartate region spans residues 194 to 197 (QLFK). Position 216 (R216) interacts with L-aspartate. ATP is bound by residues 216-218 (RDE) and Q225. H448 lines the L-aspartate pocket. E482 serves as a coordination point for ATP. Residue R489 participates in L-aspartate binding. An ATP-binding site is contributed by 534–537 (GWDR). The interval 559–591 (GGVDPLTDAPAPITEQQRKESGIDVKPEPSKPH) is disordered. Residues 574 to 591 (QQRKESGIDVKPEPSKPH) are compositionally biased toward basic and acidic residues.

Belongs to the class-II aminoacyl-tRNA synthetase family. Type 1 subfamily. In terms of assembly, homodimer.

It localises to the cytoplasm. It catalyses the reaction tRNA(Asx) + L-aspartate + ATP = L-aspartyl-tRNA(Asx) + AMP + diphosphate. Its function is as follows. Aspartyl-tRNA synthetase with relaxed tRNA specificity since it is able to aspartylate not only its cognate tRNA(Asp) but also tRNA(Asn). Reaction proceeds in two steps: L-aspartate is first activated by ATP to form Asp-AMP and then transferred to the acceptor end of tRNA(Asp/Asn). The chain is Aspartate--tRNA(Asp/Asn) ligase from Mycolicibacterium paratuberculosis (strain ATCC BAA-968 / K-10) (Mycobacterium paratuberculosis).